The following is a 186-amino-acid chain: Serine hydrolase RBBP9 (186 aa).

An involved in binding to RB1 region spans residues 63-67 (LHCDE). Catalysis depends on charge relay system residues Ser-75, Asp-138, and His-165.

Belongs to the RBBP9 family. As to quaternary structure, interacts with RB1; the interaction disrupts RB1 binding to E2F1. Interacts with RBL1 and RBL2. Highly expressed in the spleen, testis and kidney. Also found in the heart, liver, lung and brain.

The catalysed reaction is valacyclovir + H2O = acyclovir + L-valine + H(+). In terms of biological role, serine hydrolase. Catalyzes the hydrolytic activation of amino acid ester of the antiviral prodrug valacyclovir to its corresponding active drug, acyclovir. May negatively regulate basal or autocrine TGF-beta signaling by suppressing SMAD2-SMAD3 phosphorylation. May play a role in the transformation process due to its capacity to confer resistance to the growth-inhibitory effects of TGF-beta through interaction with RB1 and the subsequent displacement of E2F1. This is Serine hydrolase RBBP9 from Rattus norvegicus (Rat).